Consider the following 211-residue polypeptide: Thiamine-phosphate synthase (211 aa).

Residues 37–41 and Asn69 each bind 4-amino-2-methyl-5-(diphosphooxymethyl)pyrimidine; that span reads QYRDK. Residues Asp70 and Asp89 each coordinate Mg(2+). 4-amino-2-methyl-5-(diphosphooxymethyl)pyrimidine is bound at residue Ser108. Position 135-137 (135-137) interacts with 2-[(2R,5Z)-2-carboxy-4-methylthiazol-5(2H)-ylidene]ethyl phosphate; sequence SPT. Lys138 serves as a coordination point for 4-amino-2-methyl-5-(diphosphooxymethyl)pyrimidine. 2-[(2R,5Z)-2-carboxy-4-methylthiazol-5(2H)-ylidene]ethyl phosphate-binding positions include Gly165 and 185-186; that span reads LS.

It belongs to the thiamine-phosphate synthase family. Mg(2+) serves as cofactor.

It catalyses the reaction 2-[(2R,5Z)-2-carboxy-4-methylthiazol-5(2H)-ylidene]ethyl phosphate + 4-amino-2-methyl-5-(diphosphooxymethyl)pyrimidine + 2 H(+) = thiamine phosphate + CO2 + diphosphate. It carries out the reaction 2-(2-carboxy-4-methylthiazol-5-yl)ethyl phosphate + 4-amino-2-methyl-5-(diphosphooxymethyl)pyrimidine + 2 H(+) = thiamine phosphate + CO2 + diphosphate. The enzyme catalyses 4-methyl-5-(2-phosphooxyethyl)-thiazole + 4-amino-2-methyl-5-(diphosphooxymethyl)pyrimidine + H(+) = thiamine phosphate + diphosphate. The protein operates within cofactor biosynthesis; thiamine diphosphate biosynthesis; thiamine phosphate from 4-amino-2-methyl-5-diphosphomethylpyrimidine and 4-methyl-5-(2-phosphoethyl)-thiazole: step 1/1. Condenses 4-methyl-5-(beta-hydroxyethyl)thiazole monophosphate (THZ-P) and 2-methyl-4-amino-5-hydroxymethyl pyrimidine pyrophosphate (HMP-PP) to form thiamine monophosphate (TMP). The protein is Thiamine-phosphate synthase of Thiobacillus denitrificans (strain ATCC 25259 / T1).